The following is an 817-amino-acid chain: LPS-assembly protein LptD (817 aa).

A signal peptide spans 1–26 (MPALVVSPDLVRGAAGASAAPTPAPA). The interval 1-101 (MPALVVSPDL…ARKPGSTEVR (101 aa)) is disordered. A compositionally biased stretch (low complexity) spans 13 to 90 (GAAGASAAPT…PAASASPADA (78 aa)).

It belongs to the LptD family. Component of the lipopolysaccharide transport and assembly complex. Interacts with LptE and LptA.

The protein localises to the cell outer membrane. Together with LptE, is involved in the assembly of lipopolysaccharide (LPS) at the surface of the outer membrane. This chain is LPS-assembly protein LptD, found in Azoarcus sp. (strain BH72).